The sequence spans 127 residues: Small ribosomal subunit protein uS11 (127 aa).

It belongs to the universal ribosomal protein uS11 family. In terms of assembly, part of the 30S ribosomal subunit. Interacts with proteins S7 and S18. Binds to IF-3.

Its function is as follows. Located on the platform of the 30S subunit, it bridges several disparate RNA helices of the 16S rRNA. Forms part of the Shine-Dalgarno cleft in the 70S ribosome. The protein is Small ribosomal subunit protein uS11 of Chlorobium phaeobacteroides (strain BS1).